The following is a 642-amino-acid chain: Threonine--tRNA ligase (642 aa).

One can recognise a TGS domain in the interval 1–61; it reads MPVIRFYDGS…REDAFIEFVD (61 aa). Residues 243–534 form a catalytic region; it reads DHRKIGKFLQ…LIEECSGNLP (292 aa). Residues C334, H385, and H511 each coordinate Zn(2+).

The protein belongs to the class-II aminoacyl-tRNA synthetase family. Homodimer. The cofactor is Zn(2+).

It localises to the cytoplasm. The catalysed reaction is tRNA(Thr) + L-threonine + ATP = L-threonyl-tRNA(Thr) + AMP + diphosphate + H(+). Its function is as follows. Catalyzes the attachment of threonine to tRNA(Thr) in a two-step reaction: L-threonine is first activated by ATP to form Thr-AMP and then transferred to the acceptor end of tRNA(Thr). Also edits incorrectly charged L-seryl-tRNA(Thr). The protein is Threonine--tRNA ligase of Buchnera aphidicola subsp. Acyrthosiphon pisum (strain APS) (Acyrthosiphon pisum symbiotic bacterium).